Consider the following 290-residue polypeptide: Small ribosomal subunit protein uS2 (290 aa).

Residues 263-282 show a composition bias toward low complexity; the sequence is ATAGATWEAEAGGDWAAESA. Residues 263-290 form a disordered region; sequence ATAGATWEAEAGGDWAAESAQPNPETKW.

It belongs to the universal ribosomal protein uS2 family. Component of the small ribosomal subunit. Mature ribosomes consist of a small (40S) and a large (60S) subunit. The 40S subunit contains about 33 different proteins and 1 molecule of RNA (18S). The 60S subunit contains about 49 different proteins and 3 molecules of RNA (25S, 5.8S and 5S). Interacts with rps21.

The protein localises to the cytoplasm. Its function is as follows. Required for the assembly and/or stability of the 40S ribosomal subunit. Required for the processing of the 20S rRNA-precursor to mature 18S rRNA in a late step of the maturation of 40S ribosomal subunits. The protein is Small ribosomal subunit protein uS2 (rps0) of Talaromyces stipitatus (strain ATCC 10500 / CBS 375.48 / QM 6759 / NRRL 1006) (Penicillium stipitatum).